The chain runs to 391 residues: Apolipoprotein A-IV (391 aa).

An N-terminal signal peptide occupies residues 1 to 20; that stretch reads MFLKAVVLTVALVAITGTQA. A run of 13 repeats spans residues 33–54, 60–81, 82–103, 115–136, 137–158, 159–180, 181–202, 203–224, 225–246, 247–268, 269–286, 287–308, and 309–330. A 13 X 22 AA approximate tandem repeats region spans residues 33 to 330; it reads DYFTQLSNNA…QMEKFRQQLG (298 aa). Phosphoserine is present on Ser-333. Residues 354-391 are disordered; it reads FMSTLQKKGSPDQPLALPLPEQVQEQVQEQVQPKPLES. Positions 371-391 are enriched in low complexity; sequence PLPEQVQEQVQEQVQPKPLES.

This sequence belongs to the apolipoprotein A1/A4/E family. Homodimer. Secreted in plasma.

Its subcellular location is the secreted. Its function is as follows. May have a role in chylomicrons and VLDL secretion and catabolism. Required for efficient activation of lipoprotein lipase by ApoC-II; potent activator of LCAT. Apoa-IV is a major component of HDL and chylomicrons. This Rattus norvegicus (Rat) protein is Apolipoprotein A-IV (Apoa4).